Consider the following 889-residue polypeptide: Serine/threonine-protein kinase D3 (889 aa).

Phosphoserine occurs at positions 27, 37, 41, and 44. A Phorbol-ester/DAG-type 1 zinc finger spans residues 154 to 204; it reads PHALYVHSYKAPTFCDYCGEMLWGLVRQGLKCEGCGLNYHKRCAFKIPNNC. Residues serine 213 and serine 216 each carry the phosphoserine modification. A Phorbol-ester/DAG-type 2 zinc finger spans residues 271 to 321; sequence PHTFAVHSYGRPTICQYCKRLLKGLFRQGMQCKDCKFNCHKRCASKVPRDC. The segment at 336-370 is disordered; the sequence is TDADMPMDIDSSDVNSDGSRGLDDSEEPSPPEDKM. Serine 346, serine 391, and serine 395 each carry phosphoserine. Positions 416–532 constitute a PH domain; it reads TVVKEGWMVH…WEKAIRQALM (117 aa). Tyrosine 426 is modified (phosphotyrosine). Serine 442 is subject to Phosphoserine. Position 457 is a phosphotyrosine (tyrosine 457). Threonine 535 is subject to Phosphothreonine. Serine 539 carries the phosphoserine modification. The Protein kinase domain maps to 575-831; it reads IFADEVLGSG…VDKSLSHPWL (257 aa). Residues 581-589 and lysine 604 contribute to the ATP site; that span reads LGSGQFGIV. The active-site Proton acceptor is the aspartate 698. Serine 730 carries the phosphoserine; by PKC modification. Position 734 is a phosphoserine; by autocatalysis (serine 734). Tyrosine 741 carries the post-translational modification Phosphotyrosine.

This sequence belongs to the protein kinase superfamily. CAMK Ser/Thr protein kinase family. PKD subfamily. Requires Mg(2+) as cofactor.

It localises to the cytoplasm. The protein resides in the membrane. The enzyme catalyses L-seryl-[protein] + ATP = O-phospho-L-seryl-[protein] + ADP + H(+). It catalyses the reaction L-threonyl-[protein] + ATP = O-phospho-L-threonyl-[protein] + ADP + H(+). Its activity is regulated as follows. Activated by DAG and phorbol esters. Phorbol-ester/DAG-type domains 1 and 2 bind both DAG and phorbol ester with high affinity and mediate translocation to the cell membrane. Autophosphorylation of Ser-734 and phosphorylation of Ser-730 by PKC relieves auto-inhibition by the PH domain. In terms of biological role, converts transient diacylglycerol (DAG) signals into prolonged physiological effects, downstream of PKC. Involved in resistance to oxidative stress. This Mus musculus (Mouse) protein is Serine/threonine-protein kinase D3 (Prkd3).